The primary structure comprises 311 residues: Aspartate carbamoyltransferase catalytic subunit (311 aa).

The carbamoyl phosphate site is built by Arg55 and Thr56. Lys85 lines the L-aspartate pocket. 3 residues coordinate carbamoyl phosphate: Arg106, His134, and Gln137. Positions 167 and 228 each coordinate L-aspartate. Leu266 and Pro267 together coordinate carbamoyl phosphate.

It belongs to the aspartate/ornithine carbamoyltransferase superfamily. ATCase family. Heterododecamer (2C3:3R2) of six catalytic PyrB chains organized as two trimers (C3), and six regulatory PyrI chains organized as three dimers (R2).

It catalyses the reaction carbamoyl phosphate + L-aspartate = N-carbamoyl-L-aspartate + phosphate + H(+). Its pathway is pyrimidine metabolism; UMP biosynthesis via de novo pathway; (S)-dihydroorotate from bicarbonate: step 2/3. Functionally, catalyzes the condensation of carbamoyl phosphate and aspartate to form carbamoyl aspartate and inorganic phosphate, the committed step in the de novo pyrimidine nucleotide biosynthesis pathway. The sequence is that of Aspartate carbamoyltransferase catalytic subunit from Psychromonas ingrahamii (strain DSM 17664 / CCUG 51855 / 37).